A 121-amino-acid polypeptide reads, in one-letter code: Two-component response regulator ORR13 (121 aa).

Positions 5–121 (HVLVVDDTHV…ADVPRILNYI (117 aa)) constitute a Response regulatory domain. A 4-aspartylphosphate modification is found at Asp-55.

It belongs to the ARR family. Type-A subfamily. Post-translationally, two-component system major event consists of a His-to-Asp phosphorelay between a sensor histidine kinase (HK) and a response regulator (RR). In plants, the His-to-Asp phosphorelay involves an additional intermediate named Histidine-containing phosphotransfer protein (HPt). This multistep phosphorelay consists of a His-Asp-His-Asp sequential transfer of a phosphate group between first a His and an Asp of the HK protein, followed by the transfer to a conserved His of the HPt protein and finally the transfer to an Asp in the receiver domain of the RR protein. In terms of tissue distribution, expressed in flowers and panicles.

In terms of biological role, functions as a response regulator involved in His-to-Asp phosphorelay signal transduction system. Phosphorylation of the Asp residue in the receiver domain activates the ability of the protein to promote the transcription of target genes. Type-A response regulators seem to act as negative regulators of the cytokinin signaling. The chain is Two-component response regulator ORR13 from Oryza sativa subsp. japonica (Rice).